Reading from the N-terminus, the 129-residue chain is Protein Wnt-6 (129 aa).

5 disulfides stabilise this stretch: cysteine 3–cysteine 17, cysteine 5–cysteine 12, cysteine 75–cysteine 106, cysteine 91–cysteine 101, and cysteine 128–cysteine 129. Serine 9 carries O-palmitoleoyl serine; by PORCN lipidation. An N-linked (GlcNAc...) asparagine glycan is attached at asparagine 92.

The protein belongs to the Wnt family. In terms of processing, palmitoleoylation is required for efficient binding to frizzled receptors. Depalmitoleoylation leads to Wnt signaling pathway inhibition. At tailbud: dorsal, punctate; in adult: brain and heart.

The protein resides in the secreted. It is found in the extracellular space. It localises to the extracellular matrix. Its function is as follows. Ligand for members of the frizzled family of seven transmembrane receptors. Probable developmental protein. May be a signaling molecule which affects the development of discrete regions of tissues. Is likely to signal over only few cell diameters. The chain is Protein Wnt-6 (wnt6) from Xenopus laevis (African clawed frog).